An 818-amino-acid polypeptide reads, in one-letter code: ATM interactor (818 aa).

Over residues 1–34 the composition is skewed to low complexity; the sequence is MAATEAAAADSAGPAPGVPATPASTRGAAAASSP. The disordered stretch occupies residues 1–62; that stretch reads MAATEAAAAD…RAAAPVPPAR (62 aa). A C2H2-type 1 zinc finger spans residues 80-105; the sequence is ILCTVRGCGKILPNSPALNMHLVKSH. The C2H2-type 2; degenerate zinc finger occupies 161–181; the sequence is HKCSKCSNSYGTEWDLKRHEE. Residues 210–221 show a composition bias toward basic and acidic residues; it reads HEIPAEHRDPPS. Disordered stretches follow at residues 210 to 284 and 603 to 625; these read HEIP…ATPP and DNRS…GSAQ. A required for formation of RAD51 foci region spans residues 219–437; that stretch reads PPSKKRKMES…PDSSVSSCSQ (219 aa). 2 stretches are compositionally biased toward polar residues: residues 229–243 and 603–612; these read YLQN…TEPL and DNRSLLSDTN.

In terms of assembly, interacts via its C-terminus with ATM. Interacts with DYNLL; this interaction inhibits ATMIN transcriptional activity and hence may play a role in a feedback loop whereby DYNLL1 inhibits transactivation of its own promoter by ATMIN. ATMIN.

The protein resides in the nucleus. Its function is as follows. Transcription factor. Plays a crucial role in cell survival and RAD51 foci formation in response to methylating DNA damage. Involved in regulating the activity of ATM in the absence of DNA damage. May play a role in stabilizing ATM. Binds to the DYNLL1 promoter and activates its transcription. The polypeptide is ATM interactor (Mus musculus (Mouse)).